A 78-amino-acid polypeptide reads, in one-letter code: Protein SlyX homolog (78 aa).

Belongs to the SlyX family.

This is Protein SlyX homolog from Xylella fastidiosa (strain M23).